The chain runs to 161 residues: Regulator of ribonuclease activity A (161 aa).

It belongs to the RraA family. As to quaternary structure, homotrimer. Binds to both RNA-binding sites in the C-terminal region of Rne and to RhlB.

The protein localises to the cytoplasm. Functionally, globally modulates RNA abundance by binding to RNase E (Rne) and regulating its endonucleolytic activity. Can modulate Rne action in a substrate-dependent manner by altering the composition of the degradosome. Modulates RNA-binding and helicase activities of the degradosome. The chain is Regulator of ribonuclease activity A from Escherichia fergusonii (strain ATCC 35469 / DSM 13698 / CCUG 18766 / IAM 14443 / JCM 21226 / LMG 7866 / NBRC 102419 / NCTC 12128 / CDC 0568-73).